The following is a 444-amino-acid chain: Glutamyl-tRNA reductase (444 aa).

Substrate is bound by residues Thr-49–Arg-52, Ser-109, Glu-114–Gln-116, and Gln-120. The active-site Nucleophile is Cys-50. Gly-189–Gly-194 contacts NADP(+).

This sequence belongs to the glutamyl-tRNA reductase family. As to quaternary structure, homodimer.

It carries out the reaction (S)-4-amino-5-oxopentanoate + tRNA(Glu) + NADP(+) = L-glutamyl-tRNA(Glu) + NADPH + H(+). The protein operates within porphyrin-containing compound metabolism; protoporphyrin-IX biosynthesis; 5-aminolevulinate from L-glutamyl-tRNA(Glu): step 1/2. Catalyzes the NADPH-dependent reduction of glutamyl-tRNA(Glu) to glutamate 1-semialdehyde (GSA). The protein is Glutamyl-tRNA reductase of Bacillus cereus (strain ZK / E33L).